The following is a 162-amino-acid chain: NADH-quinone oxidoreductase subunit I (162 aa).

4Fe-4S ferredoxin-type domains follow at residues 53-83 (LRRY…IEAE) and 93-122 (TRYD…EGPN). 8 residues coordinate [4Fe-4S] cluster: cysteine 63, cysteine 66, cysteine 69, cysteine 73, cysteine 102, cysteine 105, cysteine 108, and cysteine 112.

Belongs to the complex I 23 kDa subunit family. In terms of assembly, NDH-1 is composed of 14 different subunits. Subunits NuoA, H, J, K, L, M, N constitute the membrane sector of the complex. [4Fe-4S] cluster is required as a cofactor.

The protein localises to the cell inner membrane. It carries out the reaction a quinone + NADH + 5 H(+)(in) = a quinol + NAD(+) + 4 H(+)(out). Functionally, NDH-1 shuttles electrons from NADH, via FMN and iron-sulfur (Fe-S) centers, to quinones in the respiratory chain. The immediate electron acceptor for the enzyme in this species is believed to be ubiquinone. Couples the redox reaction to proton translocation (for every two electrons transferred, four hydrogen ions are translocated across the cytoplasmic membrane), and thus conserves the redox energy in a proton gradient. This chain is NADH-quinone oxidoreductase subunit I, found in Rhodospirillum centenum (strain ATCC 51521 / SW).